The following is a 577-amino-acid chain: Probable L-gulonolactone oxidase 4 (577 aa).

Residues 1 to 17 (MSFWLSLIFCFFTFASS) form the signal peptide. Residues 46–228 (SICKAAKVEY…SQVTFELQPM (183 aa)) enclose the FAD-binding PCMH-type domain.

It belongs to the oxygen-dependent FAD-linked oxidoreductase family. The cofactor is FAD.

It catalyses the reaction L-gulono-1,4-lactone + O2 = L-ascorbate + H2O2 + H(+). It functions in the pathway cofactor biosynthesis; L-ascorbate biosynthesis. Functionally, may be involved in the biosynthesis of ascorbic acid. The sequence is that of Probable L-gulonolactone oxidase 4 from Arabidopsis thaliana (Mouse-ear cress).